We begin with the raw amino-acid sequence, 60 residues long: Large ribosomal subunit protein uL30 (60 aa).

Belongs to the universal ribosomal protein uL30 family. Part of the 50S ribosomal subunit.

This is Large ribosomal subunit protein uL30 from Staphylococcus epidermidis (strain ATCC 35984 / DSM 28319 / BCRC 17069 / CCUG 31568 / BM 3577 / RP62A).